A 120-amino-acid polypeptide reads, in one-letter code: Ribonuclease P protein component (120 aa).

Belongs to the RnpA family. As to quaternary structure, consists of a catalytic RNA component (M1 or rnpB) and a protein subunit.

The enzyme catalyses Endonucleolytic cleavage of RNA, removing 5'-extranucleotides from tRNA precursor.. RNaseP catalyzes the removal of the 5'-leader sequence from pre-tRNA to produce the mature 5'-terminus. It can also cleave other RNA substrates such as 4.5S RNA. The protein component plays an auxiliary but essential role in vivo by binding to the 5'-leader sequence and broadening the substrate specificity of the ribozyme. The protein is Ribonuclease P protein component of Rickettsia bellii (strain RML369-C).